The following is a 516-amino-acid chain: Polyprenol-phosphate-mannose--protein mannosyltransferase (516 aa).

Positions 1–11 (MTALDTDTPTA) are enriched in polar residues. The tract at residues 1–23 (MTALDTDTPTAGRSAPLISPGPV) is disordered. The next 9 membrane-spanning stretches (helical) occupy residues 113 to 133 (YNGLGWRFSGAVCGVIIVMLV), 143 to 163 (STLVGAIAGLLIIADGVSFVS), 166 to 186 (TALLDVFLVMFAVAAFACLMV), 234 to 254 (WSGLYFVLFFGVMTLVFDAIA), 275 to 295 (AAYVFGLIPFAVYLASYAPWF), 384 to 404 (VMLVGTPAMWFIAVPVLGWAL), 413 to 433 (WRYGAVLVGYMAGFLPWFADI), 437 to 457 (MYFFYATVMAPFLVLAIALIL), and 473 to 493 (LGLLTVCFYVALVITNFAWMY).

The protein belongs to the glycosyltransferase 39 family.

The protein localises to the cell membrane. It functions in the pathway protein modification; protein glycosylation. Functionally, protein O-mannosyltransferase that catalyzes the transfer of a single mannose residue from a polyprenol phospho-mannosyl lipidic donor to the hydroxyl group of selected serine and threonine residues in acceptor proteins. Involved in DNA conjugation, in at least the recipient strain. The sequence is that of Polyprenol-phosphate-mannose--protein mannosyltransferase (pmt) from Mycolicibacterium smegmatis (strain MKD8) (Mycobacterium smegmatis).